The sequence spans 189 residues: Large ribosomal subunit protein bL25 (189 aa).

Belongs to the bacterial ribosomal protein bL25 family. CTC subfamily. Part of the 50S ribosomal subunit; part of the 5S rRNA/L5/L18/L25 subcomplex. Contacts the 5S rRNA. Binds to the 5S rRNA independently of L5 and L18.

Its function is as follows. This is one of the proteins that binds to the 5S RNA in the ribosome where it forms part of the central protuberance. This Azobacteroides pseudotrichonymphae genomovar. CFP2 protein is Large ribosomal subunit protein bL25.